The chain runs to 602 residues: DNA mismatch repair protein MutL (602 aa).

This sequence belongs to the DNA mismatch repair MutL/HexB family.

This protein is involved in the repair of mismatches in DNA. It is required for dam-dependent methyl-directed DNA mismatch repair. May act as a 'molecular matchmaker', a protein that promotes the formation of a stable complex between two or more DNA-binding proteins in an ATP-dependent manner without itself being part of a final effector complex. The polypeptide is DNA mismatch repair protein MutL (Geotalea uraniireducens (strain Rf4) (Geobacter uraniireducens)).